The primary structure comprises 144 residues: uncharacterized protein (144 aa).

The interval 90–144 (KKEYSALKKSGKIHKVGGSKSSGHRKTKKPKKSMKGGSKTKKLSEKQLMKELLAM) is disordered. The span at 98-130 (KSGKIHKVGGSKSSGHRKTKKPKKSMKGGSKTK) shows a compositional bias: basic residues.

This is an uncharacterized protein from Sputnik virophage.